Here is a 416-residue protein sequence, read N- to C-terminus: MAIIDNLGQNAKKASFLLAQLGTEAKNTALLKVAEALLAELPYILEENAKDVALAQEHGISAIMVDRLRLDEKRLQDIASGVRDVAALGDPIGQVVRGYTNMVGLKIIQKRVPLGVIAMIFESRPNVSVDAFSLAFKTGNAIILRGGRDAICSNTALVNVIRRTLASFGLDENAVQLVEDTSHEVAKELMAAVDYVDVLIPRGGARLIQTVKKEAKVPVIETGVGNVHIYVDEFADLDMASKIVVNAKTQRPSVCNAAEGLLVHEKVASDFLPKLEAAINQIHPVEFRADDRAQKILKNAQPASQEDYATEFLDYIISVKIVNSLGEAIDWINTYTSHHSESIITRDIQAAERFQDEVDAAAVYVNASTRFTDGFVFGLGAEIGISTQKLHARGPMGLEALTSTKFYINGKGQIRE.

It belongs to the gamma-glutamyl phosphate reductase family.

It is found in the cytoplasm. It catalyses the reaction L-glutamate 5-semialdehyde + phosphate + NADP(+) = L-glutamyl 5-phosphate + NADPH + H(+). The protein operates within amino-acid biosynthesis; L-proline biosynthesis; L-glutamate 5-semialdehyde from L-glutamate: step 2/2. In terms of biological role, catalyzes the NADPH-dependent reduction of L-glutamate 5-phosphate into L-glutamate 5-semialdehyde and phosphate. The product spontaneously undergoes cyclization to form 1-pyrroline-5-carboxylate. This is Gamma-glutamyl phosphate reductase from Streptococcus mutans serotype c (strain ATCC 700610 / UA159).